We begin with the raw amino-acid sequence, 666 residues long: Probable potassium transport system protein Kup (666 aa).

12 consecutive transmembrane segments (helical) span residues 16–36 (GFII…LYTM), 58–78 (ISLI…LVAL), 99–119 (TPWL…DGAL), 141–161 (IFQN…LLFA), 167–187 (TGVI…FLGI), 221–241 (IFIL…YSDL), 253–273 (WPFV…WILA), 292–312 (FTMH…QALI), 343–363 (TYIP…VLLF), 373–393 (YGLA…FFLI), 402–422 (VLLM…ASAV), and 424–444 (FMHG…IMII).

Belongs to the HAK/KUP transporter (TC 2.A.72) family.

It localises to the cell membrane. It carries out the reaction K(+)(in) + H(+)(in) = K(+)(out) + H(+)(out). Functionally, transport of potassium into the cell. Likely operates as a K(+):H(+) symporter. The chain is Probable potassium transport system protein Kup from Streptococcus agalactiae serotype III (strain NEM316).